We begin with the raw amino-acid sequence, 257 residues long: uncharacterized protein (257 aa).

The first 26 residues, 1-26 (MKKAFILSAAAAVGLFTFGGVQQASA), serve as a signal peptide directing secretion. The tract at residues 80-135 (AKQSNVKVQDVQKTETAKPAQKTTEKAAADQNTASKAPATAEKTNTTTSAPSSVSA) is disordered. Residues 121–134 (EKTNTTTSAPSSVS) show a composition bias toward polar residues. An SCP domain is found at 141-254 (VELTNAERQK…ESGSIWTQQF (114 aa)).

This is an uncharacterized protein from Bacillus subtilis (strain 168).